The primary structure comprises 32 residues: Periplasmic [NiFe] hydrogenase small subunit (32 aa).

[4Fe-4S] cluster contacts are provided by Cys-17 and Cys-20.

Belongs to the [NiFe]/[NiFeSe] hydrogenase small subunit family. Heterodimer of a large and a small subunit. It depends on [3Fe-4S] cluster as a cofactor. The cofactor is [4Fe-4S] cluster.

It localises to the periplasm. The enzyme catalyses 2 Fe(III)-[cytochrome c3] + H2 = 2 Fe(II)-[cytochrome c3] + 2 H(+). This Desulfovibrio multispirans protein is Periplasmic [NiFe] hydrogenase small subunit (hydA).